Consider the following 260-residue polypeptide: Dehydrin ERD10 (260 aa).

3 disordered regions span residues 1 to 187 (MAEE…EEEK), 197 to 216 (KLPG…TTPL), and 240 to 260 (KLPG…KVSD). Position 2 is an N-acetylalanine (Ala-2). Over residues 26 to 44 (EIKERGMFDFLKKKEEVKP) the composition is skewed to basic and acidic residues. Ser-61 carries the post-translational modification Phosphoserine. Composition is skewed to basic and acidic residues over residues 67-102 (VAKH…DKLH), 130-140 (IVEGDHVKTVE), 148-162 (DRIK…KPGG), 176-187 (SVEDHKPEEEEK), and 197-207 (KLPGHSKKPED). Repeat copies occupy residues 184-204 (EEEK…HSKK) and 227-247 (PEEK…YHAK). The 2 X 21 AA repeats, Lys-rich stretch occupies residues 184–247 (EEEKKGFMDK…KEKLPGYHAK (64 aa)).

Belongs to the plant dehydrin family. In terms of tissue distribution, in stems, cauline leaves, roots and flowers. Low levels found in maturing seeds. Absent in dry seeds.

The sequence is that of Dehydrin ERD10 (ERD10) from Arabidopsis thaliana (Mouse-ear cress).